The primary structure comprises 255 residues: D-aminoacyl-tRNA deacylase (255 aa).

Belongs to the DtdA deacylase family. As to quaternary structure, monomer. Zn(2+) serves as cofactor.

The catalysed reaction is a D-aminoacyl-tRNA + H2O = a tRNA + a D-alpha-amino acid + H(+). The enzyme catalyses glycyl-tRNA(Ala) + H2O = tRNA(Ala) + glycine + H(+). D-aminoacyl-tRNA deacylase with broad substrate specificity. By recycling D-aminoacyl-tRNA to D-amino acids and free tRNA molecules, this enzyme counteracts the toxicity associated with the formation of D-aminoacyl-tRNA entities in vivo. The polypeptide is D-aminoacyl-tRNA deacylase (Picrophilus torridus (strain ATCC 700027 / DSM 9790 / JCM 10055 / NBRC 100828 / KAW 2/3)).